Here is a 138-residue protein sequence, read N- to C-terminus: MIQQTLCLIKPDATQRNLIGKILSHLEEAGLTIKALKKVQLNQEQAEGFYAEHQGKEFFAPLVEFMISAPIVAVVLEGENAISHYRELMGATNPEQRKAGTIRALYAISGRENSVHGSDSEQSAKREIAYFFTPNEIL.

Residues K10, F58, R86, T92, R103, and N113 each coordinate ATP. H116 (pros-phosphohistidine intermediate) is an active-site residue.

It belongs to the NDK family. Homotetramer. It depends on Mg(2+) as a cofactor.

It is found in the cytoplasm. It carries out the reaction a 2'-deoxyribonucleoside 5'-diphosphate + ATP = a 2'-deoxyribonucleoside 5'-triphosphate + ADP. The catalysed reaction is a ribonucleoside 5'-diphosphate + ATP = a ribonucleoside 5'-triphosphate + ADP. Major role in the synthesis of nucleoside triphosphates other than ATP. The ATP gamma phosphate is transferred to the NDP beta phosphate via a ping-pong mechanism, using a phosphorylated active-site intermediate. This is Nucleoside diphosphate kinase from Actinobacillus pleuropneumoniae serotype 7 (strain AP76).